The following is a 246-amino-acid chain: uncharacterized protein (246 aa).

Helical transmembrane passes span 32–52 (TLFF…VGFI), 69–89 (IIAI…MCPF), 121–141 (IYFK…GVKI), and 146–166 (LAYL…MFFC). 4Fe-4S ferredoxin-type domains follow at residues 185–213 (FKLK…ITEK) and 210–239 (ITEK…FSAF). The [4Fe-4S] cluster site is built by cysteine 194, cysteine 197, cysteine 200, cysteine 204, cysteine 219, cysteine 222, cysteine 225, and cysteine 229.

The protein resides in the cell membrane. This is an uncharacterized protein from Methanocaldococcus jannaschii (strain ATCC 43067 / DSM 2661 / JAL-1 / JCM 10045 / NBRC 100440) (Methanococcus jannaschii).